Reading from the N-terminus, the 72-residue chain is MIYKVYYQETKERNPQRETTQSLYLEAETEVAARTLVEDNTDHNIEFIEPLEGNFLDYEQKNPEYHLTEFNK.

Belongs to the RNA polymerase subunit epsilon family. RNAP is composed of a core of 2 alpha, a beta and a beta' subunit. The core is associated with a delta subunit, and at least one of epsilon or omega. When a sigma factor is associated with the core the holoenzyme is formed, which can initiate transcription.

The enzyme catalyses RNA(n) + a ribonucleoside 5'-triphosphate = RNA(n+1) + diphosphate. Functionally, a non-essential component of RNA polymerase (RNAP). The chain is DNA-directed RNA polymerase subunit epsilon from Lactiplantibacillus plantarum (strain ATCC BAA-793 / NCIMB 8826 / WCFS1) (Lactobacillus plantarum).